The primary structure comprises 208 residues: Outer-membrane lipoprotein LolB (208 aa).

An N-terminal signal peptide occupies residues Met-1–Ala-21. Residue Cys-22 is the site of N-palmitoyl cysteine attachment. Residue Cys-22 is the site of S-diacylglycerol cysteine attachment.

This sequence belongs to the LolB family. In terms of assembly, monomer.

It localises to the cell outer membrane. Its function is as follows. Plays a critical role in the incorporation of lipoproteins in the outer membrane after they are released by the LolA protein. The protein is Outer-membrane lipoprotein LolB of Erwinia tasmaniensis (strain DSM 17950 / CFBP 7177 / CIP 109463 / NCPPB 4357 / Et1/99).